We begin with the raw amino-acid sequence, 396 residues long: Subtilisin-like protease 5 (396 aa).

The first 20 residues, 1 to 20, serve as a signal peptide directing secretion; sequence MTGFFTILSFSLAALSVTNA. The propeptide occupies 21-116; it reads AQILSVPKGA…VEPDAIISQH (96 aa). The Inhibitor I9 domain maps to 37–113; the sequence is YIVVMKDDTS…VAFVEPDAII (77 aa). The N-linked (GlcNAc...) asparagine glycan is linked to Asn-63. The Peptidase S8 domain occupies 125–396; that stretch reads PWGLSRLSNR…SRLLYNGSGR (272 aa). Residues Asp-156 and His-187 each act as charge relay system in the active site. Residues Asn-230 and Asn-248 are each glycosylated (N-linked (GlcNAc...) asparagine). The active-site Charge relay system is the Ser-342. Polar residues predominate over residues 376–389; that stretch reads PTIRNPGPDTTSRL. The disordered stretch occupies residues 376–396; sequence PTIRNPGPDTTSRLLYNGSGR. N-linked (GlcNAc...) asparagine glycosylation occurs at Asn-392.

This sequence belongs to the peptidase S8 family.

It is found in the secreted. Functionally, secreted subtilisin-like serine protease with keratinolytic activity that contributes to pathogenicity. This Trichophyton verrucosum (Cattle ringworm fungus) protein is Subtilisin-like protease 5 (SUB5).